The chain runs to 861 residues: DNA mismatch repair protein MutS (861 aa).

G618–S625 is an ATP binding site.

The protein belongs to the DNA mismatch repair MutS family.

This protein is involved in the repair of mismatches in DNA. It is possible that it carries out the mismatch recognition step. This protein has a weak ATPase activity. The polypeptide is DNA mismatch repair protein MutS (Shewanella sp. (strain MR-4)).